The sequence spans 144 residues: Large ribosomal subunit protein uL11 (144 aa).

This sequence belongs to the universal ribosomal protein uL11 family. In terms of assembly, part of the ribosomal stalk of the 50S ribosomal subunit. Interacts with L10 and the large rRNA to form the base of the stalk. L10 forms an elongated spine to which L12 dimers bind in a sequential fashion forming a multimeric L10(L12)X complex. Post-translationally, one or more lysine residues are methylated.

Functionally, forms part of the ribosomal stalk which helps the ribosome interact with GTP-bound translation factors. This is Large ribosomal subunit protein uL11 from Streptomyces griseus subsp. griseus (strain JCM 4626 / CBS 651.72 / NBRC 13350 / KCC S-0626 / ISP 5235).